A 178-amino-acid chain; its full sequence is ATP-dependent protease subunit HslV (178 aa).

The active site involves Thr-5. Na(+) is bound by residues Gly-161, Cys-164, and Thr-167.

Belongs to the peptidase T1B family. HslV subfamily. A double ring-shaped homohexamer of HslV is capped on each side by a ring-shaped HslU homohexamer. The assembly of the HslU/HslV complex is dependent on binding of ATP.

Its subcellular location is the cytoplasm. It catalyses the reaction ATP-dependent cleavage of peptide bonds with broad specificity.. With respect to regulation, allosterically activated by HslU binding. Protease subunit of a proteasome-like degradation complex believed to be a general protein degrading machinery. The sequence is that of ATP-dependent protease subunit HslV from Aliarcobacter butzleri (strain RM4018) (Arcobacter butzleri).